An 83-amino-acid polypeptide reads, in one-letter code: RNA-binding protein Hfq (83 aa).

One can recognise a Sm domain in the interval 10-70 (DTFLNQVRKE…ISTVMPLRPI (61 aa)).

The protein belongs to the Hfq family. As to quaternary structure, homohexamer.

Functionally, RNA chaperone that binds small regulatory RNA (sRNAs) and mRNAs to facilitate mRNA translational regulation in response to envelope stress, environmental stress and changes in metabolite concentrations. Also binds with high specificity to tRNAs. This is RNA-binding protein Hfq from Desulfitobacterium hafniense (strain Y51).